We begin with the raw amino-acid sequence, 930 residues long: Isoleucine--tRNA ligase (930 aa).

A 'HIGH' region motif is present at residues 57–67; sequence PYANGNIHVGH. E554 lines the L-isoleucyl-5'-AMP pocket. The short motif at 595–599 is the 'KMSKS' region element; it reads KMSKS. Residue K598 coordinates ATP.

It belongs to the class-I aminoacyl-tRNA synthetase family. IleS type 1 subfamily. Monomer.

The protein resides in the cytoplasm. The catalysed reaction is tRNA(Ile) + L-isoleucine + ATP = L-isoleucyl-tRNA(Ile) + AMP + diphosphate. Catalyzes the attachment of isoleucine to tRNA(Ile). As IleRS can inadvertently accommodate and process structurally similar amino acids such as valine, to avoid such errors it has two additional distinct tRNA(Ile)-dependent editing activities. One activity is designated as 'pretransfer' editing and involves the hydrolysis of activated Val-AMP. The other activity is designated 'posttransfer' editing and involves deacylation of mischarged Val-tRNA(Ile). The polypeptide is Isoleucine--tRNA ligase (Streptococcus agalactiae serotype III (strain NEM316)).